A 144-amino-acid chain; its full sequence is Flagellar assembly factor FliW (144 aa).

This sequence belongs to the FliW family. In terms of assembly, monomer. One copy interacts with the each alpha-helical wing of the CsrA homodimer, yielding a FliW-CsrA(2)-FliW complex. Comparison with a CsrA-mRNA structure (2JPP) suggests CsrA cannot bind both mRNA and FliW at the same time. Interacts with flagellin.

The protein resides in the cytoplasm. Acts as an anti-CsrA protein, binds CsrA and prevents it from repressing translation of its target genes, one of which is flagellin. Binds to flagellin and participates in the assembly of the flagellum. In terms of biological role, allosterically inhibits CsrA binding to mRNA in a non-competitive fashion by preventing CsrA binding to the 5'-UTR. The protein is Flagellar assembly factor FliW of Geobacillus thermodenitrificans (strain NG80-2).